The sequence spans 261 residues: Ribosomal RNA small subunit methyltransferase A (261 aa).

Positions 20, 22, 47, 68, 90, and 110 each coordinate S-adenosyl-L-methionine.

Belongs to the class I-like SAM-binding methyltransferase superfamily. rRNA adenine N(6)-methyltransferase family. RsmA subfamily.

It is found in the cytoplasm. The catalysed reaction is adenosine(1518)/adenosine(1519) in 16S rRNA + 4 S-adenosyl-L-methionine = N(6)-dimethyladenosine(1518)/N(6)-dimethyladenosine(1519) in 16S rRNA + 4 S-adenosyl-L-homocysteine + 4 H(+). Its function is as follows. Specifically dimethylates two adjacent adenosines (A1518 and A1519) in the loop of a conserved hairpin near the 3'-end of 16S rRNA in the 30S particle. May play a critical role in biogenesis of 30S subunits. In Prosthecochloris aestuarii (strain DSM 271 / SK 413), this protein is Ribosomal RNA small subunit methyltransferase A.